Here is a 180-residue protein sequence, read N- to C-terminus: Geminin homolog (180 aa).

A compositionally biased stretch (polar residues) spans 1 to 27 (MSRIGLQQLNNSARNSPFGSEKATGTK). Residues 1 to 29 (MSRIGLQQLNNSARNSPFGSEKATGTKQI) form a disordered region.

Belongs to the geminin family. Homodimer. Interacts with cdt-1; the interaction most likely inhibits the ability of cdt-1 to load the mini-chromosome maintenance (MCM) complex onto DNA and therefore reduces DNA replication licensing activity. Interacts with nob-1 and ceh-32.

Its subcellular location is the cytoplasm. The protein localises to the nucleus. Functionally, inhibits DNA replication by binding to the DNA replication licensing factor cdt-1. Its interaction with cdt-1 prevents the cdt-1 loading of the mini-chromosome maintenance (MCM) complex onto DNA and therefore DNA replication licencing. The chain is Geminin homolog from Caenorhabditis elegans.